The primary structure comprises 269 residues: MNNQEAINALQMVRQANPLVHNITNVVVTNFTANGLLALGASPVMAYAKEEVADMAKIAGALVLNIGTLNPTEVEAMIIAGKAANEAGVPVIFDPVGAGATPYRTETARNIASAVQLSVIRGNAAEIANTIGESWTIKGVDAGEGSGDVVSLAKKAAKQLKTVVAITGKEDVVTDGNTTYIIRNGHPLLTKVTGTGCLLTSVIGAFAAVERDVLKAAAAALVIYGVAAEIAAKNAGDEGPGSFQIAFLDALSRVGADEISRYGRIEQGE.

Residue Met-45 coordinates substrate. Residues Arg-121 and Thr-167 each coordinate ATP. Gly-194 is a substrate binding site.

It belongs to the Thz kinase family. Mg(2+) is required as a cofactor.

It carries out the reaction 5-(2-hydroxyethyl)-4-methylthiazole + ATP = 4-methyl-5-(2-phosphooxyethyl)-thiazole + ADP + H(+). It participates in cofactor biosynthesis; thiamine diphosphate biosynthesis; 4-methyl-5-(2-phosphoethyl)-thiazole from 5-(2-hydroxyethyl)-4-methylthiazole: step 1/1. Catalyzes the phosphorylation of the hydroxyl group of 4-methyl-5-beta-hydroxyethylthiazole (THZ). In Geobacillus sp. (strain WCH70), this protein is Hydroxyethylthiazole kinase.